The chain runs to 258 residues: Acetylglutamate kinase (258 aa).

Substrate-binding positions include 44 to 45 (GG), Arg66, and Asn158. ATP-binding positions include 181–186 (DVSGIL) and 209–211 (IIT).

The protein belongs to the acetylglutamate kinase family. ArgB subfamily. As to quaternary structure, homodimer.

The protein resides in the cytoplasm. The catalysed reaction is N-acetyl-L-glutamate + ATP = N-acetyl-L-glutamyl 5-phosphate + ADP. The protein operates within amino-acid biosynthesis; L-arginine biosynthesis; N(2)-acetyl-L-ornithine from L-glutamate: step 2/4. Functionally, catalyzes the ATP-dependent phosphorylation of N-acetyl-L-glutamate. The protein is Acetylglutamate kinase of Shigella flexneri.